A 464-amino-acid polypeptide reads, in one-letter code: Adenylyltransferase and sulfurtransferase MOCS3 (464 aa).

Residues glycine 101, aspartate 122, 129–133, lysine 146, and 190–191 contribute to the ATP site; these read NNMHR and DN. Zn(2+) is bound by residues cysteine 231 and cysteine 234. Cysteine 248 functions as the Glycyl thioester intermediate; for adenylyltransferase activity in the catalytic mechanism. 2 residues coordinate Zn(2+): cysteine 306 and cysteine 309. The Rhodanese domain occupies 358-462; that stretch reads KKEQHVLLDV…WAANVNPNFP (105 aa). The active-site Cysteine persulfide intermediate; for sulfurtransferase activity is cysteine 422.

This sequence in the N-terminal section; belongs to the HesA/MoeB/ThiF family. UBA4 subfamily. The cofactor is Zn(2+).

The protein resides in the cytoplasm. The catalysed reaction is [molybdopterin-synthase sulfur-carrier protein]-C-terminal Gly-Gly + ATP + H(+) = [molybdopterin-synthase sulfur-carrier protein]-C-terminal Gly-Gly-AMP + diphosphate. The enzyme catalyses [molybdopterin-synthase sulfur-carrier protein]-C-terminal Gly-Gly-AMP + S-sulfanyl-L-cysteinyl-[cysteine desulfurase] + AH2 = [molybdopterin-synthase sulfur-carrier protein]-C-terminal-Gly-aminoethanethioate + L-cysteinyl-[cysteine desulfurase] + A + AMP + 2 H(+). It functions in the pathway tRNA modification; 5-methoxycarbonylmethyl-2-thiouridine-tRNA biosynthesis. The protein operates within cofactor biosynthesis; molybdopterin biosynthesis. In terms of biological role, plays a central role in 2-thiolation of mcm(5)S(2)U at tRNA wobble positions of cytosolic tRNA(Lys), tRNA(Glu) and tRNA(Gln). Also essential during biosynthesis of the molybdenum cofactor. Acts by mediating the C-terminal thiocarboxylation of sulfur carriers URM1 and MOCS2A. Its N-terminus first activates URM1 and MOCS2A as acyl-adenylates (-COAMP), then the persulfide sulfur on the catalytic cysteine is transferred to URM1 and MOCS2A to form thiocarboxylation (-COSH) of their C-terminus. The reaction probably involves hydrogen sulfide that is generated from the persulfide intermediate and that acts as a nucleophile towards URM1 and MOCS2A. Subsequently, a transient disulfide bond is formed. Does not use thiosulfate as sulfur donor; NFS1 probably acting as a sulfur donor for thiocarboxylation reactions. This is Adenylyltransferase and sulfurtransferase MOCS3 from Arabidopsis thaliana (Mouse-ear cress).